A 375-amino-acid chain; its full sequence is Growth/differentiation factor 8 (375 aa).

Residues 1–18 (MQKLQISVYIYLFMLIVA) form the signal peptide. A propeptide spanning residues 19 to 266 (GPVDLNEKSE…VTDTPKRSRR (248 aa)) is cleaved from the precursor. N-linked (GlcNAc...) asparagine glycosylation is found at Asn47 and Asn71. Intrachain disulfides connect Cys272-Cys282, Cys281-Cys340, Cys309-Cys372, and Cys313-Cys374.

It belongs to the TGF-beta family. Homodimer; disulfide-linked. Interacts with WFIKKN2, leading to inhibit its activity. Interacts with FSTL3. Post-translationally, synthesized as large precursor molecule that undergoes proteolytic cleavage to generate an N-terminal propeptide and a disulfide linked C-terminal dimer, which is the biologically active molecule. The circulating form consists of a latent complex of the C-terminal dimer and other proteins, including its propeptide, which maintain the C-terminal dimer in a latent, inactive state. Ligand activation requires additional cleavage of the prodomain by a tolloid-like metalloproteinase.

It is found in the secreted. In terms of biological role, acts specifically as a negative regulator of skeletal muscle growth. This chain is Growth/differentiation factor 8 (MSTN), found in Taurotragus derbianus (Giant eland).